Reading from the N-terminus, the 353-residue chain is uncharacterized protein (353 aa).

Positions 1–24 (MRVVERAVIACYLGITIFSGIAFG) are cleaved as a signal peptide.

The protein belongs to the chlamydial CPn_1058/CT_355/TC_0634 family.

This is an uncharacterized protein from Chlamydia trachomatis serovar D (strain ATCC VR-885 / DSM 19411 / UW-3/Cx).